The primary structure comprises 370 residues: MSKTSVDKLLRIPQSLRDSISRTRVDYRHLGNCGLRVSNPILGGLHIGNSRWLPWVLNEEDAMPILKAAYDRGINTWDTANVYSNGESEKVIAKALRKYNIPRSKVILMTKCYRVVCDSENFDPGSGVTMHHELADKSKDYVNQWGLSRAAIFNAVEASLERLGTHYIDIFQIHRFDPTVPIAETMSALNDLVKAGMVRYLGASSMWTYQFAAMQNLAHAKGWTKFVSMQNHYNLIYREEEREMIRYCNDTGVGLIPWAPLASGRLARRPSQQSVSIRASNSRNGSIYEADDSNTDKIVSRVEEIAVKRNWPMSHVALAWLNKRVTAPIIGFSTVQRIEEALAAVGKELSEDEERYLEELYAPRPIQGHS.

NADP(+) is bound at residue Asp-78. The active-site Proton donor is the Tyr-83. Substrate is bound at residue His-174. NADP(+)-binding positions include 204–205, Gln-230, 259–269, and 333–341; these read SS, APLASGRLARR, and STVQRIEEA.

The protein belongs to the aldo/keto reductase family.

The protein operates within secondary metabolite biosynthesis. Functionally, aldo-keto reductase; part of the gene cluster that mediates the biosynthesis of sansalvamide, a cyclic pentadepsipeptide that shows promising results as potential anti-cancer drug. The nonribosmal peptide synthetase NRPS30 produces sansalvamide by incorporating successively one phenylalanine, one leucine, one alpha-hydroxyisocaproic acid (HICA), one valine and one leucine before sansalvamide is released from by cyclization by the terminal C domain of NRPS30. The HICA residue is probably provided by reduction of alpha-ketoisocaproate by the cluster-specific aldo-keto reductase (NECHADRAFT_45914). The polypeptide is Aldo-keto reductase NECHADRAFT_45914 (Fusarium vanettenii (strain ATCC MYA-4622 / CBS 123669 / FGSC 9596 / NRRL 45880 / 77-13-4) (Fusarium solani subsp. pisi)).